We begin with the raw amino-acid sequence, 376 residues long: Chaperone protein DnaJ (376 aa).

Positions 5–70 (DYYEVLGVGR…DKKAAYDQFG (66 aa)) constitute a J domain. A CR-type zinc finger spans residues 132-210 (GLTKELRIPT…CHGEGRVEKS (79 aa)). Zn(2+)-binding residues include Cys145, Cys148, Cys162, Cys165, Cys184, Cys187, Cys198, and Cys201. 4 CXXCXGXG motif repeats span residues 145 to 152 (CDLCDGSG), 162 to 169 (CGTCHGQG), 184 to 191 (CPTCHGRG), and 198 to 205 (CGKCHGEG).

Belongs to the DnaJ family. As to quaternary structure, homodimer. Requires Zn(2+) as cofactor.

It is found in the cytoplasm. Its function is as follows. Participates actively in the response to hyperosmotic and heat shock by preventing the aggregation of stress-denatured proteins and by disaggregating proteins, also in an autonomous, DnaK-independent fashion. Unfolded proteins bind initially to DnaJ; upon interaction with the DnaJ-bound protein, DnaK hydrolyzes its bound ATP, resulting in the formation of a stable complex. GrpE releases ADP from DnaK; ATP binding to DnaK triggers the release of the substrate protein, thus completing the reaction cycle. Several rounds of ATP-dependent interactions between DnaJ, DnaK and GrpE are required for fully efficient folding. Also involved, together with DnaK and GrpE, in the DNA replication of plasmids through activation of initiation proteins. The protein is Chaperone protein DnaJ of Shewanella frigidimarina (strain NCIMB 400).